We begin with the raw amino-acid sequence, 341 residues long: MKVALIGITGYGGMVLYQMLKTHPGIDQVDLYARHLAGPTPLNQLVPNLFDDQPVYPYDSQKILANDGAVFFATPAGVTKTAARPYLTAHFPVIDLSGDYRLKNGATYEKWYHQSPAATADLKVAHYGLTDFCDATDENLIANPGCYATATLLGLAPLIIDQLIDLDTIVVDAKSGTSGAGKKPTSSTHFTQVNENAQLYNVNHHKHIPEIVQQLQAWDPAVDAIQFSTTLLPITRGILATIYAKPKPGVNKDQVVAAFKQTYATDPFVRYTGENLPTIKQVVGTNYCDLGVLFNERANTIMVASVIDNLIKGAGGQAIQNFNQRFNFAPTAGLPTAPLLP.

Residue C146 is part of the active site.

It belongs to the NAGSA dehydrogenase family. Type 1 subfamily.

It localises to the cytoplasm. It carries out the reaction N-acetyl-L-glutamate 5-semialdehyde + phosphate + NADP(+) = N-acetyl-L-glutamyl 5-phosphate + NADPH + H(+). It functions in the pathway amino-acid biosynthesis; L-arginine biosynthesis; N(2)-acetyl-L-ornithine from L-glutamate: step 3/4. Functionally, catalyzes the NADPH-dependent reduction of N-acetyl-5-glutamyl phosphate to yield N-acetyl-L-glutamate 5-semialdehyde. In Limosilactobacillus fermentum (strain NBRC 3956 / LMG 18251) (Lactobacillus fermentum), this protein is N-acetyl-gamma-glutamyl-phosphate reductase.